We begin with the raw amino-acid sequence, 378 residues long: Dual-specificity RNA methyltransferase RlmN (378 aa).

The Proton acceptor role is filled by Glu95. The Radical SAM core domain maps to 101–345; sequence EETRGTLCVS…TTIRKTRGDD (245 aa). Cys108 and Cys350 are oxidised to a cystine. [4Fe-4S] cluster contacts are provided by Cys115, Cys119, and Cys122. S-adenosyl-L-methionine contacts are provided by residues 176 to 177, Ser208, 230 to 232, and Asn307; these read GE and SLH. Cys350 (S-methylcysteine intermediate) is an active-site residue.

This sequence belongs to the radical SAM superfamily. RlmN family. Requires [4Fe-4S] cluster as cofactor.

The protein resides in the cytoplasm. The catalysed reaction is adenosine(2503) in 23S rRNA + 2 reduced [2Fe-2S]-[ferredoxin] + 2 S-adenosyl-L-methionine = 2-methyladenosine(2503) in 23S rRNA + 5'-deoxyadenosine + L-methionine + 2 oxidized [2Fe-2S]-[ferredoxin] + S-adenosyl-L-homocysteine. The enzyme catalyses adenosine(37) in tRNA + 2 reduced [2Fe-2S]-[ferredoxin] + 2 S-adenosyl-L-methionine = 2-methyladenosine(37) in tRNA + 5'-deoxyadenosine + L-methionine + 2 oxidized [2Fe-2S]-[ferredoxin] + S-adenosyl-L-homocysteine. Specifically methylates position 2 of adenine 2503 in 23S rRNA and position 2 of adenine 37 in tRNAs. m2A2503 modification seems to play a crucial role in the proofreading step occurring at the peptidyl transferase center and thus would serve to optimize ribosomal fidelity. This chain is Dual-specificity RNA methyltransferase RlmN, found in Burkholderia pseudomallei (strain K96243).